A 153-amino-acid polypeptide reads, in one-letter code: Aspartate carbamoyltransferase regulatory chain (153 aa).

Zn(2+) contacts are provided by Cys109, Cys114, Cys138, and Cys141.

Belongs to the PyrI family. As to quaternary structure, contains catalytic and regulatory chains. Zn(2+) serves as cofactor.

Its function is as follows. Involved in allosteric regulation of aspartate carbamoyltransferase. The polypeptide is Aspartate carbamoyltransferase regulatory chain (Nitrosopumilus maritimus (strain SCM1)).